Reading from the N-terminus, the 509-residue chain is Lysine--tRNA ligase (509 aa).

Mg(2+) contacts are provided by Glu395 and Glu402.

Belongs to the class-II aminoacyl-tRNA synthetase family. Homodimer. Requires Mg(2+) as cofactor.

Its subcellular location is the cytoplasm. It carries out the reaction tRNA(Lys) + L-lysine + ATP = L-lysyl-tRNA(Lys) + AMP + diphosphate. The sequence is that of Lysine--tRNA ligase from Fervidobacterium nodosum (strain ATCC 35602 / DSM 5306 / Rt17-B1).